The sequence spans 91 residues: MTDTDIKSHKIEFPCVDYPIKVIGDTSAGFTAAVMEVLEKHAQVDAKTLAERQSSNGKYTTVQLHIIATSEDQLRDINSALRATGFVHMVL.

This sequence belongs to the UPF0250 family.

The chain is UPF0250 protein PSPTO_4820 from Pseudomonas syringae pv. tomato (strain ATCC BAA-871 / DC3000).